Reading from the N-terminus, the 378-residue chain is Chaperone protein DnaJ (378 aa).

The region spanning 5 to 72 (DFYEVLGVPK…QKRAAYDQFG (68 aa)) is the J domain. A CR-type zinc finger spans residues 138 to 216 (GKEAQIRIPS…CHGQGKVKKQ (79 aa)). Zn(2+) is bound by residues C151, C154, C168, C171, C190, C193, C204, and C207. CXXCXGXG motif repeat units lie at residues 151–158 (CETCHGSG), 168–175 (CTTCSGTG), 190–197 (CPHCRGTG), and 204–211 (CVTCHGQG). The interval 354–378 (SLKKGGGKHSPSGESWTDRLKNLFT) is disordered. Residues 369–378 (WTDRLKNLFT) are compositionally biased toward basic and acidic residues.

It belongs to the DnaJ family. Homodimer. Zn(2+) serves as cofactor.

The protein resides in the cytoplasm. Participates actively in the response to hyperosmotic and heat shock by preventing the aggregation of stress-denatured proteins and by disaggregating proteins, also in an autonomous, DnaK-independent fashion. Unfolded proteins bind initially to DnaJ; upon interaction with the DnaJ-bound protein, DnaK hydrolyzes its bound ATP, resulting in the formation of a stable complex. GrpE releases ADP from DnaK; ATP binding to DnaK triggers the release of the substrate protein, thus completing the reaction cycle. Several rounds of ATP-dependent interactions between DnaJ, DnaK and GrpE are required for fully efficient folding. Also involved, together with DnaK and GrpE, in the DNA replication of plasmids through activation of initiation proteins. The sequence is that of Chaperone protein DnaJ from Paracidovorax citrulli (strain AAC00-1) (Acidovorax citrulli).